Consider the following 428-residue polypeptide: Serine--tRNA ligase (428 aa).

T231 to E233 is an L-serine binding site. R262 to E264 contacts ATP. E285 contributes to the L-serine binding site. Residue E349 to S352 participates in ATP binding. S385 contacts L-serine.

Belongs to the class-II aminoacyl-tRNA synthetase family. Type-1 seryl-tRNA synthetase subfamily. As to quaternary structure, homodimer. The tRNA molecule binds across the dimer.

It localises to the cytoplasm. It carries out the reaction tRNA(Ser) + L-serine + ATP = L-seryl-tRNA(Ser) + AMP + diphosphate + H(+). The enzyme catalyses tRNA(Sec) + L-serine + ATP = L-seryl-tRNA(Sec) + AMP + diphosphate + H(+). It functions in the pathway aminoacyl-tRNA biosynthesis; selenocysteinyl-tRNA(Sec) biosynthesis; L-seryl-tRNA(Sec) from L-serine and tRNA(Sec): step 1/1. In terms of biological role, catalyzes the attachment of serine to tRNA(Ser). Is also able to aminoacylate tRNA(Sec) with serine, to form the misacylated tRNA L-seryl-tRNA(Sec), which will be further converted into selenocysteinyl-tRNA(Sec). The protein is Serine--tRNA ligase of Staphylococcus haemolyticus (strain JCSC1435).